The primary structure comprises 379 residues: Homoserine O-succinyltransferase (379 aa).

One can recognise an AB hydrolase-1 domain in the interval 51 to 360 (NAVLICHALS…DSPYGHDAFL (310 aa)). The Nucleophile role is filled by S157. R227 contributes to the substrate binding site. Active-site residues include D323 and H356. D357 contacts substrate.

The protein belongs to the AB hydrolase superfamily. MetX family. In terms of assembly, homodimer.

It is found in the cytoplasm. It carries out the reaction L-homoserine + succinyl-CoA = O-succinyl-L-homoserine + CoA. It participates in amino-acid biosynthesis; L-methionine biosynthesis via de novo pathway; O-succinyl-L-homoserine from L-homoserine: step 1/1. Its function is as follows. Transfers a succinyl group from succinyl-CoA to L-homoserine, forming succinyl-L-homoserine. This chain is Homoserine O-succinyltransferase, found in Pseudomonas entomophila (strain L48).